A 1715-amino-acid polypeptide reads, in one-letter code: Protein PHYLLO, chloroplastic (1715 aa).

The N-terminal 19 residues, 1–19 (MRSSFLVSNPPFLPSLIPR), are a transit peptide targeting the chloroplast. Residues 20-273 (YSSRKSIRRS…EKSIFQVSSH (254 aa)) are inactive isochorismate synthase. The 2-succinyl-5-enolpyruvyl-6-hydroxy-3-cyclohexene-1-carboxylate synthase stretch occupies residues 363–933 (NAVWASAIIE…GTKSELEDAL (571 aa)). A helical membrane pass occupies residues 429–449 (AVIITSSGTAVSNLLPAVVEA). An O-succinylbenzoate synthase region spans residues 981–1364 (FLHPMIKNVL…SEDVMMNTLG (384 aa)). The Proton donor; for the o-succinylbenzoate synthase activity role is filled by lysine 1170. Mg(2+) is bound by residues aspartate 1202, glutamate 1228, and aspartate 1251. Lysine 1279 serves as the catalytic Proton acceptor; for the o-succinylbenzoate synthase activity. Residues 1418 to 1715 (HFIRVHDVGE…QKLLLALKEM (298 aa)) are 2-succinyl-6-hydroxy-2,4-cyclohexadiene-1-carboxylate synthase. The region spanning 1435-1540 (LFLHGFLGTG…EGAVVVSGSP (106 aa)) is the AB hydrolase-1 domain.

In the N-terminal section; belongs to the isochorismate synthase family. The protein in the 2nd section; belongs to the TPP enzyme family. MenD subfamily. It in the 3rd section; belongs to the mandelate racemase/muconate lactonizing enzyme family. MenC type 1 subfamily. This sequence in the C-terminal section; belongs to the AB hydrolase superfamily. MenH family. It depends on Mg(2+) as a cofactor. The cofactor is Mn(2+). Requires thiamine diphosphate as cofactor.

Its subcellular location is the plastid. It localises to the chloroplast membrane. The enzyme catalyses isochorismate + 2-oxoglutarate + H(+) = 5-enolpyruvoyl-6-hydroxy-2-succinyl-cyclohex-3-ene-1-carboxylate + CO2. It carries out the reaction (1R,6R)-6-hydroxy-2-succinyl-cyclohexa-2,4-diene-1-carboxylate = 2-succinylbenzoate + H2O. It catalyses the reaction 5-enolpyruvoyl-6-hydroxy-2-succinyl-cyclohex-3-ene-1-carboxylate = (1R,6R)-6-hydroxy-2-succinyl-cyclohexa-2,4-diene-1-carboxylate + pyruvate. Its function is as follows. Multifunctional enzyme required for phylloquinone (vitamin K1) biosynthesis. This is Protein PHYLLO, chloroplastic (PHYLLO) from Arabidopsis thaliana (Mouse-ear cress).